A 670-amino-acid polypeptide reads, in one-letter code: MKVSSQTPGELSKKKFELLHDARYWDSPQFKLISGFEPKGSQPQAIEKLVEGLKKREQFQTLLGVTGSGKTYTVANVINQIRKPTLVIAHNKTLAAQLYNEFREFFPENRVEYFVSYYDYYQPESYLPAKDQYIEKDAQINPKIEQMRLAATASLMSRQDVIVVASVSCIYGLGNPENFQKMGFELKVGDKVQRKEILEKLIDIQFERNDMELMPGRFRVKGDTIDIIPGYFDDIIRVELFGDEVDRISEVDKQTGQRKEDMDYFFVYPARHYVIPEEEQKSAIRSILEELEEHLPTLGLLESHRLKQRTLYDMEMIEETGSCKGIENYSRHFDHRQPGEQPFCLLDYFPEDFLLIIDESHQTIPQLHGMYNGDRSRKKSLVDYGFRLPSAYDNRPLKFEEFEKYMENVIFVSATPSDYEREHSARIVEQIIRPTGLVDPEVEVRPLEGQVRDVMQEIRKIVDRGDRALVTTLTKKLAEELTEFLARNEIKARYLHSDIKTIERTEIIRELRLGKFDVLVGINLLREGLDIPEVGFIGILDADKEGFLRDSKSLIQIIGRAARNSSSKVVLYADNMTESIKKAVDETERRRSMQIAYNEEHGIVPKTIRKPIREKVVDITDTKHIPKTDIPNVIIELDAEMREAADRLDFERAIQLRELIKKLEKEVKAV.

The Helicase ATP-binding domain occupies 51–433; that stretch reads EGLKKREQFQ…SARIVEQIIR (383 aa). 64-71 serves as a coordination point for ATP; sequence GVTGSGKT. Positions 117–140 match the Beta-hairpin motif; the sequence is YYDYYQPESYLPAKDQYIEKDAQI. One can recognise a Helicase C-terminal domain in the interval 453 to 612; the sequence is DVMQEIRKIV…IVPKTIRKPI (160 aa). Residues 631–666 enclose the UVR domain; sequence PNVIIELDAEMREAADRLDFERAIQLRELIKKLEKE.

This sequence belongs to the UvrB family. In terms of assembly, forms a heterotetramer with UvrA during the search for lesions. Interacts with UvrC in an incision complex.

The protein localises to the cytoplasm. Its function is as follows. The UvrABC repair system catalyzes the recognition and processing of DNA lesions. A damage recognition complex composed of 2 UvrA and 2 UvrB subunits scans DNA for abnormalities. Upon binding of the UvrA(2)B(2) complex to a putative damaged site, the DNA wraps around one UvrB monomer. DNA wrap is dependent on ATP binding by UvrB and probably causes local melting of the DNA helix, facilitating insertion of UvrB beta-hairpin between the DNA strands. Then UvrB probes one DNA strand for the presence of a lesion. If a lesion is found the UvrA subunits dissociate and the UvrB-DNA preincision complex is formed. This complex is subsequently bound by UvrC and the second UvrB is released. If no lesion is found, the DNA wraps around the other UvrB subunit that will check the other stand for damage. This chain is UvrABC system protein B, found in Methanosarcina acetivorans (strain ATCC 35395 / DSM 2834 / JCM 12185 / C2A).